We begin with the raw amino-acid sequence, 43 residues long: Parvalbumin beta (43 aa).

2 consecutive EF-hand domains span residues 1 to 20 (KVFE…LKLF) and 22 to 43 (LSSA…ALVK). Residues D7, D9, S11, F12, E14, E16, and E37 each contribute to the Ca(2+) site.

Detected in muscle and cutaneous mucus. In the skin, detected in cells in the basal region of the glandular epithelium of the dermal mucus glands (at protein level).

It localises to the cytoplasm. The protein localises to the secreted. In terms of biological role, in muscle, parvalbumin is thought to be involved in relaxation after contraction. It binds two calcium ions. The sequence is that of Parvalbumin beta from Rana temporaria (European common frog).